Reading from the N-terminus, the 2049-residue chain is Polyunsaturated fatty acid synthase subunit B (2049 aa).

2 Ketosynthase family 3 (KS3) domains span residues 15-442 (EKRI…VFEE) and 468-908 (NMRI…LLSD). Residues cysteine 196, histidine 333, and histidine 368 each act as for beta-ketoacyl synthase 1 activity in the active site. The segment at 467–984 (NNMRIAITGM…LGETLAQEAD (518 aa)) is chain length factor (CLF) domain. The segment at 1044–1377 (RVAFMYGEGR…QRSHVTGAMD (334 aa)) is acyltransferase (AT) domain. The segment at 1500 to 1531 (NKDNQPAVAPAATAAPTPKPKPAASSGKPVPS) is disordered. Residues 1505 to 1531 (PAVAPAATAAPTPKPKPAASSGKPVPS) show a composition bias toward low complexity. The interval 1579–1887 (SRAFMKTYGV…SRANKLYELF (309 aa)) is enoyl reductase (ER) domain.

As to quaternary structure, component of the polyunsaturated fatty acid synthase complex composed of at least ORF-A, ORF-B and ORF-C.

The protein operates within lipid metabolism; fatty acid biosynthesis. Poliketide synthase-like protein; part of the polyunsaturated fatty acid synthase composed of the 3 PKS-like subunits A, B and C. While the saturated fatty acids (SFAs) in Thraustochytrium are produced by the conventional fatty acid synthase (FAS) pathway, polyunsaturated fatty acids (PUFAs) including docosahexeanoic acid (DHA) and docosapentaenoic acid (DPA) are synthesized via an anaerobical PKS pathway. PUFA synthase assimilates fatty acyl-CoA, the product of FAS, as the starter unit to synthesize DPA, and this starter unit may be butyryl-CoA, hexanoyl-CoA, or octanoyl-CoA. DPA and DHA biosynthesis seem to differ by the reduction at the N-3 position by PUFA synthase, not the extension of carbon chain. In DHA biosynthesis, PUFA synthase extends the fatty acyl chain from the methyl toward the carboxyl end, and the double bond is formed when the carbon chain is growing, instead of afterward. Therefore, PUFA synthase is unable to transform DPA to DHA, suggesting that DPA is not the precursor of DHA. Moreover, DPA molecule is partly extended by FAS KS domain, so DPA biosynthesis is less dependent on PUFA synthase KS domain than DHA. This is Polyunsaturated fatty acid synthase subunit B from Thraustochytrium sp. (strain ATCC 26185 / S-3).